Here is a 196-residue protein sequence, read N- to C-terminus: Zinc metalloproteinase-disintegrin-like bothrojarin-3 (196 aa).

The region spanning 2-88 (PPVCGTELLE…DCPTDDIQRN (87 aa)) is the Disintegrin domain. Ca(2+)-binding residues include Val4, Leu9, Glu11, Glu14, and Asp17. Cystine bridges form between Cys5–Cys34, Cys16–Cys29, Cys18–Cys24, Cys28–Cys51, Cys42–Cys48, Cys47–Cys73, Cys60–Cys80, Cys67–Cys99, Cys92–Cys104, Cys111–Cys161, Cys126–Cys168, Cys139–Cys149, and Cys156–Cys193. A D/ECD-tripeptide motif is present at residues 66–68 (ECD).

Belongs to the venom metalloproteinase (M12B) family. P-III subfamily. P-IIIa sub-subfamily. As to quaternary structure, monomer. Requires Zn(2+) as cofactor. In terms of processing, glycosylated. In terms of tissue distribution, expressed by the venom gland.

The protein localises to the secreted. Its function is as follows. The hemorrhagic metalloproteinase-disintegrin-like bothrojarin-1 is a potent inhibitor of collagen-induced platelet aggregation by blockage of alpha-2/beta-1 (ITGA2/ITGB1) integrin. It does not present any fibrinogen-clotting activity. The protein is Zinc metalloproteinase-disintegrin-like bothrojarin-3 of Bothrops jararaca (Jararaca).